The following is a 625-amino-acid chain: Alpha-protein kinase vwkA (625 aa).

A compositionally biased stretch (basic and acidic residues) spans 1–15; that stretch reads MESKYVLSTEKESKT. Residues 1–64 form a disordered region; that stretch reads MESKYVLSTE…GLSSGGSKTH (64 aa). Composition is skewed to polar residues over residues 25–39 and 46–63; these read DMDS…TSLG and SLKT…GSKT. Residues 87-114 adopt a coiled-coil conformation; sequence TKDSITLAKEKEKKIEKRNEEIKLTFKA. The region spanning 122–322 is the VWFA domain; sequence DLLFIVDCTG…KMNERIFISI (201 aa). One can recognise an Alpha-type protein kinase domain in the interval 386 to 600; that stretch reads TCLSSSYEMK…HCKKLGLTIP (215 aa). Position 570–576 (570–576) interacts with ATP; sequence GSCNLGK. Residues 602 to 625 form a disordered region; the sequence is FTSSSSTSSSSRSTSSSSSISYSY.

This sequence belongs to the protein kinase superfamily. Alpha-type protein kinase family. ALPK subfamily. As to quaternary structure, interacts with calmodulin; in the presence of calcium. Autophosphorylated, in vitro.

The protein resides in the cytoplasm. The protein localises to the cytosol. Its subcellular location is the perinuclear region. It is found in the contractile vacuole membrane. The enzyme catalyses L-seryl-[protein] + ATP = O-phospho-L-seryl-[protein] + ADP + H(+). The catalysed reaction is L-threonyl-[protein] + ATP = O-phospho-L-threonyl-[protein] + ADP + H(+). With respect to regulation, autophosphorylation activity enhanced by calcium/calmodulin. Functionally, displays a modest preference for threonine over serine residues. Does not phosphorylate myosin II, however can phosphorylate MBP, in vitro. May be involved in the regulation of myosin II function during cytokinesis. Overexpression leads to impaired cell proliferation in suspension culture and fails to develop beyond the mound stage. Both overexpression and absence of the gene can result in defects in cytokinesis and alterations in myosin II abundance and assembly. This chain is Alpha-protein kinase vwkA (vwkA), found in Dictyostelium discoideum (Social amoeba).